A 344-amino-acid polypeptide reads, in one-letter code: Phenylalanine--tRNA ligase alpha subunit (344 aa).

Residue E256 participates in Mg(2+) binding.

The protein belongs to the class-II aminoacyl-tRNA synthetase family. Phe-tRNA synthetase alpha subunit type 1 subfamily. Tetramer of two alpha and two beta subunits. Mg(2+) serves as cofactor.

The protein resides in the cytoplasm. It carries out the reaction tRNA(Phe) + L-phenylalanine + ATP = L-phenylalanyl-tRNA(Phe) + AMP + diphosphate + H(+). The sequence is that of Phenylalanine--tRNA ligase alpha subunit from Bacillus pumilus (strain SAFR-032).